The following is a 418-amino-acid chain: cAMP-dependent protein kinase type II-beta regulatory subunit (418 aa).

Positions 2-153 are dimerization and phosphorylation; the sequence is SIEIPAGLTE…RLQEACKDIL (152 aa). A compositionally biased stretch (basic and acidic residues) spans 45-57; the sequence is RKGTARFGHEGRT. A disordered region spans residues 45 to 98; sequence RKGTARFGHEGRTWGDAGAAGGGGTPSKGVNFAEEPRHSDSENGEEEEEEAADA. A Phosphothreonine modification is found at Thr69. 2 positions are modified to phosphoserine: Ser83 and Ser85. The span at 86–96 shows a compositional bias: acidic residues; the sequence is ENGEEEEEEAA. Residue Ser114 is modified to Phosphoserine. Residues 154 to 275, Glu223, Arg232, 276 to 418, Glu352, and Arg361 each bind 3',5'-cyclic AMP; these read LFKN…ESLP and FLKS…EPTA.

Belongs to the cAMP-dependent kinase regulatory chain family. As to quaternary structure, the inactive form of the enzyme is composed of two regulatory chains and two catalytic chains. Activation by cAMP produces two active catalytic monomers and a regulatory dimer that binds four cAMP molecules. Interacts with PRKACA and PRKACB. Interacts with the phosphorylated form of PJA2. Forms a complex composed of PRKAR2B, GSK3B and GSKIP through GSKIP interaction; facilitates PKA-induced phosphorylation and regulates GSK3B activity. Post-translationally, phosphorylated by the activated catalytic chain. In terms of tissue distribution, four types of regulatory chains are found: I-alpha, I-beta, II-alpha, and II-beta. Their expression varies among tissues and is in some cases constitutive and in others inducible.

It is found in the cytoplasm. The protein resides in the cell membrane. In terms of biological role, regulatory subunit of the cAMP-dependent protein kinases involved in cAMP signaling in cells. Type II regulatory chains mediate membrane association by binding to anchoring proteins, including the MAP2 kinase. This chain is cAMP-dependent protein kinase type II-beta regulatory subunit (PRKAR2B), found in Bos taurus (Bovine).